Reading from the N-terminus, the 304-residue chain is Ribonuclease Z (304 aa).

His63, His65, Asp67, His68, His143, Asp213, and His271 together coordinate Zn(2+). The active-site Proton acceptor is Asp67.

This sequence belongs to the RNase Z family. In terms of assembly, homodimer. It depends on Zn(2+) as a cofactor.

The catalysed reaction is Endonucleolytic cleavage of RNA, removing extra 3' nucleotides from tRNA precursor, generating 3' termini of tRNAs. A 3'-hydroxy group is left at the tRNA terminus and a 5'-phosphoryl group is left at the trailer molecule.. Functionally, zinc phosphodiesterase, which displays some tRNA 3'-processing endonuclease activity. Probably involved in tRNA maturation, by removing a 3'-trailer from precursor tRNA. The chain is Ribonuclease Z from Porphyromonas gingivalis (strain ATCC 33277 / DSM 20709 / CIP 103683 / JCM 12257 / NCTC 11834 / 2561).